A 269-amino-acid polypeptide reads, in one-letter code: Tryptophan synthase alpha chain (269 aa).

Active-site proton acceptor residues include Glu-50 and Asp-61.

This sequence belongs to the TrpA family. In terms of assembly, tetramer of two alpha and two beta chains.

The enzyme catalyses (1S,2R)-1-C-(indol-3-yl)glycerol 3-phosphate + L-serine = D-glyceraldehyde 3-phosphate + L-tryptophan + H2O. It functions in the pathway amino-acid biosynthesis; L-tryptophan biosynthesis; L-tryptophan from chorismate: step 5/5. The alpha subunit is responsible for the aldol cleavage of indoleglycerol phosphate to indole and glyceraldehyde 3-phosphate. This Buchnera aphidicola subsp. Baizongia pistaciae (strain Bp) protein is Tryptophan synthase alpha chain.